We begin with the raw amino-acid sequence, 360 residues long: Phospho-N-acetylmuramoyl-pentapeptide-transferase (360 aa).

A run of 10 helical transmembrane segments spans residues 26-46 (AILSVLTALGLSLWMGPIMIK), 70-90 (GTPTMGGIMILAAISITILLW), 94-114 (SNPYVWAVLTVLLGYGAVGFV), 132-152 (WKYFWQSLIAFVVAFALYAYG), 168-188 (VMPQLGLMYIILTYFVIVGTS), 199-219 (GLAIMPTVLVAAGFAVIAWAT), 236-256 (ASELVVVCTAIVGAGLGFLWF), 263-283 (VFMGDVGSLALGGALGTIAVL), 288-308 (LVLVIMGGVFVMETLSVILQV), and 338-358 (VIVRFWIISMVLVLIGLATLK).

Belongs to the glycosyltransferase 4 family. MraY subfamily. The cofactor is Mg(2+).

It localises to the cell inner membrane. The enzyme catalyses UDP-N-acetyl-alpha-D-muramoyl-L-alanyl-gamma-D-glutamyl-meso-2,6-diaminopimeloyl-D-alanyl-D-alanine + di-trans,octa-cis-undecaprenyl phosphate = di-trans,octa-cis-undecaprenyl diphospho-N-acetyl-alpha-D-muramoyl-L-alanyl-D-glutamyl-meso-2,6-diaminopimeloyl-D-alanyl-D-alanine + UMP. Its pathway is cell wall biogenesis; peptidoglycan biosynthesis. Functionally, catalyzes the initial step of the lipid cycle reactions in the biosynthesis of the cell wall peptidoglycan: transfers peptidoglycan precursor phospho-MurNAc-pentapeptide from UDP-MurNAc-pentapeptide onto the lipid carrier undecaprenyl phosphate, yielding undecaprenyl-pyrophosphoryl-MurNAc-pentapeptide, known as lipid I. This is Phospho-N-acetylmuramoyl-pentapeptide-transferase from Vibrio parahaemolyticus serotype O3:K6 (strain RIMD 2210633).